The primary structure comprises 610 residues: MNLEDLKKRQEKIRNFSIIAHIDHGKSTLADRILEKTETVSSREMQAQLLDSMDLERERGITIKLNAIELNYTAKDGETYIFHLIDTPGHVDFTYEVSRSLAACEGAILVVDAAQGIEAQTLANVYLALDNDLEILPIINKIDLPAADPERVRQEIEDVIGLDASEAVPTSAKAGIGIEEILEQIVEKVPAPTGDVEAPLQALIFDSVYDPYRGVILQVRIVNGVVKPGDTIQMMSNGKTFDVTEVGIFTPKAIGRDYLATGDVGYIAASIKTVADTRVGDTVTLAENPASEPLAGYKQMNPMVFAGIYPIDSNKYNDLREALEKLQLNDASLQFEPETSQALGFGFRCGFLGLLHMDVIQERIEREFNIDLIMTAPSVVYHVNMTDGEMIDVANPSEFPDPTKIATIEEPYVKAQIMVPQEYVGAVMELAQRKRGDFVTMDYIDDNRVNVIYQIPLAEIVFDFFDKLKSSTRGYASFDYEISEYRSSKLVKMDILLNGDKVDALSFIVHKEFAYERGKIIVDKLKKIIPRQQFEVPIQAAIGQKIVARSDIKALRKNVLAKCYGGDVSRKRKLLEKQKAGKKRMKAIGSVEVPQEAFLSVLSMDEDDKK.

In terms of domain architecture, tr-type G spans 11-193; sequence EKIRNFSIIA…QIVEKVPAPT (183 aa). GTP is bound by residues 23 to 28 and 140 to 143; these read DHGKST and NKID.

It belongs to the TRAFAC class translation factor GTPase superfamily. Classic translation factor GTPase family. LepA subfamily.

The protein localises to the cell membrane. It catalyses the reaction GTP + H2O = GDP + phosphate + H(+). In terms of biological role, required for accurate and efficient protein synthesis under certain stress conditions. May act as a fidelity factor of the translation reaction, by catalyzing a one-codon backward translocation of tRNAs on improperly translocated ribosomes. Back-translocation proceeds from a post-translocation (POST) complex to a pre-translocation (PRE) complex, thus giving elongation factor G a second chance to translocate the tRNAs correctly. Binds to ribosomes in a GTP-dependent manner. This Streptococcus suis (strain 98HAH33) protein is Elongation factor 4.